The sequence spans 382 residues: Osmoprotectant import ATP-binding protein OsmV (382 aa).

Positions 2–241 (IKLENLTKQF…PANEFVGSFV (240 aa)) constitute an ABC transporter domain. Residue 39–46 (GPSGCGKT) coordinates ATP. CBS domains lie at 258–320 (VTDQ…THPF) and 322–373 (ITGK…GRTR).

Belongs to the ABC transporter superfamily. The complex is composed of two ATP-binding proteins (OsmV), two transmembrane proteins (OsmW and OsmY) and a solute-binding protein (OsmX).

It localises to the cell inner membrane. Part of the OsmU ABC transporter complex, which is involved in the uptake of osmoprotectants such as choline-O-sulfate and glycine betaine. Probably responsible for energy coupling to the transport system. The polypeptide is Osmoprotectant import ATP-binding protein OsmV (osmV) (Salmonella typhimurium (strain LT2 / SGSC1412 / ATCC 700720)).